The primary structure comprises 715 residues: Protein naked cuticle homolog (715 aa).

The 36-residue stretch at 18–53 folds into the EF-hand domain; the sequence is KKPQPLQFSFTLYDLDGHGKITKDDIAGIVSTIYES. Residues 256–282 form a disordered region; the sequence is SRAKRKVVRKSRSSRKASKLTDDFSRP. The span at 257–273 shows a compositional bias: basic residues; it reads RAKRKVVRKSRSSRKAS. The segment at 305–334 is required for nuclear localization and inhibition of Wnt signaling; that stretch reads ECWKSSLCRRELIEIIRDSMVKNSLCFQPN. The tract at residues 639-690 is disordered; sequence ELHQSVQQQQGTHQQQQQPQSSVSSPTHHHHHHAGASLLGENSGSSASAAST. Low complexity-rich tracts occupy residues 642–664 and 673–690; these read QSVQ…VSSP and GASL…AAST.

Belongs to the NKD family.

It localises to the cell membrane. Its subcellular location is the cytoplasm. The protein localises to the nucleus. In terms of biological role, cell autonomous antagonist of the canonical Wnt signaling pathway. May activate a second Wnt signaling pathway that controls planar cell polarity. Required for neuroblast specification. This Aedes aegypti (Yellowfever mosquito) protein is Protein naked cuticle homolog.